A 326-amino-acid chain; its full sequence is Olfactory receptor 11H2 (326 aa).

Residues 1-44 (MCPLTLHVTGLMNVSEPNSSFAFVNEFILQGFSCEWTIQIFLFS) lie on the Extracellular side of the membrane. N-linked (GlcNAc...) asparagine glycans are attached at residues Asn-13 and Asn-18. A helical membrane pass occupies residues 45–65 (LFTTIYALTITGNGAIAFVLW). Topologically, residues 66–72 (CDRRLHT) are cytoplasmic. The chain crosses the membrane as a helical span at residues 73-93 (PMYMFLGNFSFLEIWYVSSTV). Over 94-112 (PKMLVNFLSEKKNISFAGC) the chain is Extracellular. Asn-106 carries N-linked (GlcNAc...) asparagine glycosylation. A disulfide bridge connects residues Cys-112 and Cys-194. Residues 113–133 (FLQFYFFFSLGTSECLLLTVM) form a helical membrane-spanning segment. Topologically, residues 134 to 158 (AFDQYLAICRPLLYPNIMTGHLYAK) are cytoplasmic. A helical membrane pass occupies residues 159–179 (LVILCWVCGFLWFLIPIVLIS). Over 180–216 (QKPFCGPNIIDHVVCDPGPLFALDCVSAPRIQLFCYT) the chain is Extracellular. A helical membrane pass occupies residues 217-237 (LSSLVIFGNFLFIIGSYTLVL). The Cytoplasmic segment spans residues 238–259 (KAVLGMPSSTGRHKAFSTCGSH). A helical transmembrane segment spans residues 260–280 (LAVVSLCYSPLMVMYVSPGLG). The Extracellular portion of the chain corresponds to 281 to 287 (HSTGMQK). The helical transmembrane segment at 288-308 (IETLFYAMVTPLFNPLIYSLQ) threads the bilayer. Residues 309 to 326 (NKEIKAALRKVLGSSNII) are Cytoplasmic-facing.

Belongs to the G-protein coupled receptor 1 family.

Its subcellular location is the cell membrane. Functionally, odorant receptor. In Homo sapiens (Human), this protein is Olfactory receptor 11H2 (OR11H2).